A 412-amino-acid polypeptide reads, in one-letter code: Serine hydroxymethyltransferase (412 aa).

Residues Leu117 and 121–123 contribute to the (6S)-5,6,7,8-tetrahydrofolate site; that span reads GHL. N6-(pyridoxal phosphate)lysine is present on Lys226.

This sequence belongs to the SHMT family. As to quaternary structure, homodimer. The cofactor is pyridoxal 5'-phosphate.

It is found in the cytoplasm. It catalyses the reaction (6R)-5,10-methylene-5,6,7,8-tetrahydrofolate + glycine + H2O = (6S)-5,6,7,8-tetrahydrofolate + L-serine. The protein operates within one-carbon metabolism; tetrahydrofolate interconversion. It participates in amino-acid biosynthesis; glycine biosynthesis; glycine from L-serine: step 1/1. In terms of biological role, catalyzes the reversible interconversion of serine and glycine with tetrahydrofolate (THF) serving as the one-carbon carrier. This reaction serves as the major source of one-carbon groups required for the biosynthesis of purines, thymidylate, methionine, and other important biomolecules. Also exhibits THF-independent aldolase activity toward beta-hydroxyamino acids, producing glycine and aldehydes, via a retro-aldol mechanism. This Symbiobacterium thermophilum (strain DSM 24528 / JCM 14929 / IAM 14863 / T) protein is Serine hydroxymethyltransferase.